A 460-amino-acid polypeptide reads, in one-letter code: Diguanylate cyclase DosC (460 aa).

His98 serves as a coordination point for heme. The 134-residue stretch at 325–458 (TPLSVLIIDV…GRNRVELWKA (134 aa)) folds into the GGDEF domain. Asp333 is a binding site for Mg(2+). Substrate-binding residues include Asn341 and Asp350. Residue Asp376 participates in Mg(2+) binding. Residue Asp376 is the Proton acceptor of the active site.

Requires heme as cofactor. Mg(2+) is required as a cofactor.

It carries out the reaction 2 GTP = 3',3'-c-di-GMP + 2 diphosphate. Its pathway is purine metabolism; 3',5'-cyclic di-GMP biosynthesis. Its function is as follows. Globin-coupled heme-based oxygen sensor protein displaying diguanylate cyclase (DGC) activity in response to oxygen availability. Thus, catalyzes the synthesis of cyclic diguanylate (c-di-GMP) via the condensation of 2 GTP molecules. Cyclic-di-GMP is a second messenger which controls cell surface-associated traits in bacteria. The protein is Diguanylate cyclase DosC (dosC) of Shigella boydii serotype 4 (strain Sb227).